A 98-amino-acid chain; its full sequence is uncharacterized protein (98 aa).

This is an uncharacterized protein from Homo sapiens (Human).